Consider the following 297-residue polypeptide: Homoserine kinase (297 aa).

An ATP-binding site is contributed by 82-92 (PLTRGLGSSAS).

Belongs to the GHMP kinase family. Homoserine kinase subfamily.

The protein localises to the cytoplasm. It carries out the reaction L-homoserine + ATP = O-phospho-L-homoserine + ADP + H(+). It participates in amino-acid biosynthesis; L-threonine biosynthesis; L-threonine from L-aspartate: step 4/5. Catalyzes the ATP-dependent phosphorylation of L-homoserine to L-homoserine phosphate. The chain is Homoserine kinase from Bacillus cereus (strain G9842).